The chain runs to 190 residues: Potassium-transporting ATPase KdpC subunit (190 aa).

Residues threonine 10 to glycine 30 form a helical membrane-spanning segment.

The protein belongs to the KdpC family. In terms of assembly, the system is composed of three essential subunits: KdpA, KdpB and KdpC.

It localises to the cell inner membrane. Functionally, part of the high-affinity ATP-driven potassium transport (or Kdp) system, which catalyzes the hydrolysis of ATP coupled with the electrogenic transport of potassium into the cytoplasm. This subunit acts as a catalytic chaperone that increases the ATP-binding affinity of the ATP-hydrolyzing subunit KdpB by the formation of a transient KdpB/KdpC/ATP ternary complex. In Escherichia coli O6:H1 (strain CFT073 / ATCC 700928 / UPEC), this protein is Potassium-transporting ATPase KdpC subunit.